We begin with the raw amino-acid sequence, 32 residues long: Conotoxin pr6b (32 aa).

4 positions are modified to 4-hydroxyproline: Pro6, Pro13, Pro20, and Pro29. 3 disulfides stabilise this stretch: Cys7-Cys18, Cys14-Cys23, and Cys17-Cys31.

In terms of tissue distribution, expressed by the venom duct.

The protein localises to the secreted. Its function is as follows. Intraperitoneal injection into fish (0.5 nmol) provokes vertical suspension and paralysis after 6 minutes. In Conus parius (Cone snail), this protein is Conotoxin pr6b.